The sequence spans 858 residues: Protein translocase subunit SecA (858 aa).

ATP-binding positions include Gln88, 106-110 (GEGKT), and Asp494. A disordered region spans residues 808 to 848 (KEDRGQLSYSGGGNAEDARNTPAKAAPRIGRNDPCPCGSGR). Positions 842, 844, 853, and 854 each coordinate Zn(2+).

This sequence belongs to the SecA family. In terms of assembly, monomer and homodimer. Part of the essential Sec protein translocation apparatus which comprises SecA, SecYEG and auxiliary proteins SecDF-YajC and YidC. Zn(2+) is required as a cofactor.

The protein resides in the cell inner membrane. Its subcellular location is the cytoplasm. It catalyses the reaction ATP + H2O + cellular proteinSide 1 = ADP + phosphate + cellular proteinSide 2.. Functionally, part of the Sec protein translocase complex. Interacts with the SecYEG preprotein conducting channel. Has a central role in coupling the hydrolysis of ATP to the transfer of proteins into and across the cell membrane, serving as an ATP-driven molecular motor driving the stepwise translocation of polypeptide chains across the membrane. This chain is Protein translocase subunit SecA, found in Desulfovibrio desulfuricans (strain ATCC 27774 / DSM 6949 / MB).